The primary structure comprises 591 residues: Aspartate--tRNA(Asp/Asn) ligase (591 aa).

Glutamate 176 provides a ligand contact to L-aspartate. An aspartate region spans residues glutamine 200–lysine 203. Arginine 222 serves as a coordination point for L-aspartate. ATP is bound by residues arginine 222–glutamate 224 and glutamine 231. An L-aspartate-binding site is contributed by histidine 450. Glutamate 484 is a binding site for ATP. Arginine 491 lines the L-aspartate pocket. ATP is bound at residue glycine 536–arginine 539.

This sequence belongs to the class-II aminoacyl-tRNA synthetase family. Type 1 subfamily. Homodimer.

The protein localises to the cytoplasm. It catalyses the reaction tRNA(Asx) + L-aspartate + ATP = L-aspartyl-tRNA(Asx) + AMP + diphosphate. Aspartyl-tRNA synthetase with relaxed tRNA specificity since it is able to aspartylate not only its cognate tRNA(Asp) but also tRNA(Asn). Reaction proceeds in two steps: L-aspartate is first activated by ATP to form Asp-AMP and then transferred to the acceptor end of tRNA(Asp/Asn). This Bacillus cereus (strain ATCC 10987 / NRS 248) protein is Aspartate--tRNA(Asp/Asn) ligase.